The chain runs to 295 residues: ATP synthase gamma chain (295 aa).

Belongs to the ATPase gamma chain family. F-type ATPases have 2 components, CF(1) - the catalytic core - and CF(0) - the membrane proton channel. CF(1) has five subunits: alpha(3), beta(3), gamma(1), delta(1), epsilon(1). CF(0) has three main subunits: a, b and c.

The protein localises to the cell inner membrane. Functionally, produces ATP from ADP in the presence of a proton gradient across the membrane. The gamma chain is believed to be important in regulating ATPase activity and the flow of protons through the CF(0) complex. This is ATP synthase gamma chain from Campylobacter fetus subsp. fetus (strain 82-40).